A 302-amino-acid polypeptide reads, in one-letter code: Recombination-associated protein RdgC (302 aa).

This sequence belongs to the RdgC family.

Its subcellular location is the cytoplasm. The protein localises to the nucleoid. Functionally, may be involved in recombination. This Xylella fastidiosa (strain M23) protein is Recombination-associated protein RdgC.